The primary structure comprises 569 residues: Proline--tRNA ligase (569 aa).

Belongs to the class-II aminoacyl-tRNA synthetase family. ProS type 1 subfamily. In terms of assembly, homodimer.

It is found in the cytoplasm. It carries out the reaction tRNA(Pro) + L-proline + ATP = L-prolyl-tRNA(Pro) + AMP + diphosphate. In terms of biological role, catalyzes the attachment of proline to tRNA(Pro) in a two-step reaction: proline is first activated by ATP to form Pro-AMP and then transferred to the acceptor end of tRNA(Pro). As ProRS can inadvertently accommodate and process non-cognate amino acids such as alanine and cysteine, to avoid such errors it has two additional distinct editing activities against alanine. One activity is designated as 'pretransfer' editing and involves the tRNA(Pro)-independent hydrolysis of activated Ala-AMP. The other activity is designated 'posttransfer' editing and involves deacylation of mischarged Ala-tRNA(Pro). The misacylated Cys-tRNA(Pro) is not edited by ProRS. This Legionella pneumophila (strain Paris) protein is Proline--tRNA ligase.